A 366-amino-acid chain; its full sequence is MRIVVSGGGTGGHIYPALAFIKEVKRHHEDVEFLYIGTEKGLEKNIVEREGIPFKAIEITGFKRKLSFENVKTVMRFLKGVKECKEELKRFKPDAVIGTGGYVCGPVVYAASKLGIPTIIHEQNSLPGLTNKFLSKYVDKVAICFDEAKTHFPAEKVVFTGNPRASEVVSIKGGRSLTALGLAEGKKTVLIFGGSRGAAPINEAVIAMQNELKKRDYQVLYVTGEVHYDKVTAALEKEGAAPNMVVQPFLHQMPEYLKAFDVVVGRAGATTIAEITALGIPSVLIPSPYVTANHQEVNARSLGEQNAAVVLKESELNGDRLIQAIDHILQDEKTLEEMKIRAKSLGVPDAAERLYNVLKELKHHAK.

Residues 10-12, Asn-124, Ser-195, and Gln-295 each bind UDP-N-acetyl-alpha-D-glucosamine; that span reads TGG.

The protein belongs to the glycosyltransferase 28 family. MurG subfamily.

The protein localises to the cell membrane. The catalysed reaction is di-trans,octa-cis-undecaprenyl diphospho-N-acetyl-alpha-D-muramoyl-L-alanyl-D-glutamyl-meso-2,6-diaminopimeloyl-D-alanyl-D-alanine + UDP-N-acetyl-alpha-D-glucosamine = di-trans,octa-cis-undecaprenyl diphospho-[N-acetyl-alpha-D-glucosaminyl-(1-&gt;4)]-N-acetyl-alpha-D-muramoyl-L-alanyl-D-glutamyl-meso-2,6-diaminopimeloyl-D-alanyl-D-alanine + UDP + H(+). Its pathway is cell wall biogenesis; peptidoglycan biosynthesis. Its function is as follows. Cell wall formation. Catalyzes the transfer of a GlcNAc subunit on undecaprenyl-pyrophosphoryl-MurNAc-pentapeptide (lipid intermediate I) to form undecaprenyl-pyrophosphoryl-MurNAc-(pentapeptide)GlcNAc (lipid intermediate II). The protein is UDP-N-acetylglucosamine--N-acetylmuramyl-(pentapeptide) pyrophosphoryl-undecaprenol N-acetylglucosamine transferase of Bacillus licheniformis (strain ATCC 14580 / DSM 13 / JCM 2505 / CCUG 7422 / NBRC 12200 / NCIMB 9375 / NCTC 10341 / NRRL NRS-1264 / Gibson 46).